The sequence spans 360 residues: Inhibin alpha chain (360 aa).

The N-terminal stretch at 1-17 (MWLQLLLLLLAPQGGHG) is a signal peptide. Positions 18–60 (CHGLELDRELVLAKVRALFLDALGPPPVTGEGGDPGVRRLHRR) are excised as a propeptide. Residues 61-226 (HAVGGFMRRG…PPSGGERARR (166 aa)) constitute a propeptide, inhibin alpha N-terminal region. N-linked (GlcNAc...) asparagine glycosylation is found at asparagine 140 and asparagine 262. 3 disulfides stabilise this stretch: cysteine 256-cysteine 322, cysteine 285-cysteine 357, and cysteine 289-cysteine 359.

The protein belongs to the TGF-beta family. In terms of assembly, dimeric, linked by one or more disulfide bonds. Activin B is a dimer of alpha and beta-B. Inhibin A is a dimer of alpha and beta-A. Inhibin B is a dimer of alpha and beta-B. Interacts with TGFBR3L; this interaction regulates female fertility. Proteolytic processing yields a number of bioactive forms, consisting either solely of the mature alpha chain, of the most N-terminal propeptide linked through a disulfide bond to the mature alpha chain, or of the entire proprotein.

Its subcellular location is the secreted. Functionally, inhibins and activins inhibit and activate, respectively, the secretion of follitropin by the pituitary gland. Inhibins/activins are involved in regulating a number of diverse functions such as hypothalamic and pituitary hormone secretion, gonadal hormone secretion, germ cell development and maturation, erythroid differentiation, insulin secretion, nerve cell survival, embryonic axial development or bone growth, depending on their subunit composition. Inhibins appear to oppose the functions of activins. Inhibin A is a dimer of alpha/INHA and beta-A/INHBA that functions as a feedback regulator in the hypothalamic-pituitary-gonadal (HPG) axis. Inhibits the secretion of FSH from the anterior pituitary gland by acting on pituitary gonadotrope cells. Antagonizes activin A by binding to the proteoglycan, betaglycan, and forming a stable complex with and, thereby, sequestering type II activin receptors while excluding type I receptor. Its function is as follows. Inhibin B is a dimer of alpha and beta-B that plays a crucial role in the regulation of the reproductive system by inhibiting the secretion of follicle-stimulating hormone (FSH) from the anterior pituitary gland. Thereby, maintains reproductive homeostasis in both males and females. Acts as a more potent suppressor of FSH release than inhibin A. Functions as competitive receptor antagonist binding activin type II receptors with high affinity in the presence of the TGF-beta type III coreceptor/TGFBR3L. The polypeptide is Inhibin alpha chain (INHA) (Bos taurus (Bovine)).